We begin with the raw amino-acid sequence, 315 residues long: Homoserine kinase (315 aa).

Pro-97–Thr-107 is a binding site for ATP.

It belongs to the GHMP kinase family. Homoserine kinase subfamily.

It localises to the cytoplasm. It carries out the reaction L-homoserine + ATP = O-phospho-L-homoserine + ADP + H(+). It participates in amino-acid biosynthesis; L-threonine biosynthesis; L-threonine from L-aspartate: step 4/5. Catalyzes the ATP-dependent phosphorylation of L-homoserine to L-homoserine phosphate. This Synechococcus sp. (strain CC9605) protein is Homoserine kinase.